A 401-amino-acid polypeptide reads, in one-letter code: Sulfate adenylyltransferase (401 aa).

Belongs to the sulfate adenylyltransferase family.

The enzyme catalyses sulfate + ATP + H(+) = adenosine 5'-phosphosulfate + diphosphate. It functions in the pathway sulfur metabolism; hydrogen sulfide biosynthesis; sulfite from sulfate: step 1/3. This chain is Sulfate adenylyltransferase, found in Alcanivorax borkumensis (strain ATCC 700651 / DSM 11573 / NCIMB 13689 / SK2).